Consider the following 145-residue polypeptide: MELVQVLKRGLQRITGHGGLRGYLRVFFRTNDAKVGTLVGEDKYGNKYYEDNKQFFGRHRWVVYTTEMNGKNTFWDVDGSMVPPEWHHWLHSITDDPPTTKPLTARKFIWTNHKFNVTGTPEQYVPYSTTRKKIQEWIPPSTPYK.

Residue Met-1 is modified to N-acetylmethionine.

This sequence belongs to the complex I NDUFA12 subunit family. Complex I is composed of 45 different subunits.

Its subcellular location is the mitochondrion inner membrane. Functionally, accessory subunit of the mitochondrial membrane respiratory chain NADH dehydrogenase (Complex I), that is believed not to be involved in catalysis. Complex I functions in the transfer of electrons from NADH to the respiratory chain. The immediate electron acceptor for the enzyme is believed to be ubiquinone. The protein is NADH dehydrogenase [ubiquinone] 1 alpha subcomplex subunit 12 (NDUFA12) of Pongo pygmaeus (Bornean orangutan).